Here is a 452-residue protein sequence, read N- to C-terminus: UDP-N-acetylmuramoylalanine--D-glutamate ligase (452 aa).

Position 119–125 (Gly119–Thr125) interacts with ATP.

Belongs to the MurCDEF family.

The protein localises to the cytoplasm. It catalyses the reaction UDP-N-acetyl-alpha-D-muramoyl-L-alanine + D-glutamate + ATP = UDP-N-acetyl-alpha-D-muramoyl-L-alanyl-D-glutamate + ADP + phosphate + H(+). The protein operates within cell wall biogenesis; peptidoglycan biosynthesis. Its function is as follows. Cell wall formation. Catalyzes the addition of glutamate to the nucleotide precursor UDP-N-acetylmuramoyl-L-alanine (UMA). The polypeptide is UDP-N-acetylmuramoylalanine--D-glutamate ligase (Streptococcus pyogenes serotype M5 (strain Manfredo)).